A 255-amino-acid chain; its full sequence is tRNA (guanine-N(7)-)-methyltransferase (255 aa).

The disordered stretch occupies residues 1–29; that stretch reads MMHDDPNEAGLPPDDAALPDEAADGADEV. The segment covering 17–27 has biased composition (acidic residues); the sequence is ALPDEAADGAD. S-adenosyl-L-methionine-binding residues include Glu86, Glu111, Asp138, and Asp161. Residue Asp161 is part of the active site. Substrate is bound by residues Lys165, Asp197, and 232 to 235; that span reads TKFE.

Belongs to the class I-like SAM-binding methyltransferase superfamily. TrmB family.

The enzyme catalyses guanosine(46) in tRNA + S-adenosyl-L-methionine = N(7)-methylguanosine(46) in tRNA + S-adenosyl-L-homocysteine. It functions in the pathway tRNA modification; N(7)-methylguanine-tRNA biosynthesis. Catalyzes the formation of N(7)-methylguanine at position 46 (m7G46) in tRNA. This Burkholderia ambifaria (strain ATCC BAA-244 / DSM 16087 / CCUG 44356 / LMG 19182 / AMMD) (Burkholderia cepacia (strain AMMD)) protein is tRNA (guanine-N(7)-)-methyltransferase.